Consider the following 350-residue polypeptide: S-adenosylmethionine:tRNA ribosyltransferase-isomerase (350 aa).

This sequence belongs to the QueA family. As to quaternary structure, monomer.

Its subcellular location is the cytoplasm. The catalysed reaction is 7-aminomethyl-7-carbaguanosine(34) in tRNA + S-adenosyl-L-methionine = epoxyqueuosine(34) in tRNA + adenine + L-methionine + 2 H(+). The protein operates within tRNA modification; tRNA-queuosine biosynthesis. Its function is as follows. Transfers and isomerizes the ribose moiety from AdoMet to the 7-aminomethyl group of 7-deazaguanine (preQ1-tRNA) to give epoxyqueuosine (oQ-tRNA). The protein is S-adenosylmethionine:tRNA ribosyltransferase-isomerase of Aliivibrio fischeri (strain ATCC 700601 / ES114) (Vibrio fischeri).